The chain runs to 138 residues: Centromere protein S (138 aa).

Residue Met-1 is modified to N-acetylmethionine. A disordered region spans residues 110–138; sequence RKAQKKKKSEDGSKNSRQPAEAGVVESEN.

The protein belongs to the TAF9 family. CENP-S/MHF1 subfamily. In terms of assembly, heterodimer with CENPX, sometimes called MHF; this interaction stabilizes both partners. MHF heterodimers can assemble to form tetrameric structures. MHF also coassemble with CENPT-CENPW heterodimers at centromeres to form the tetrameric CENP-T-W-S-X complex. Forms a discrete complex with FANCM and CENPX, called FANCM-MHF; this interaction, probably mediated by direct binding between CENPS and FANCM, leads to synergistic activation of double-stranded DNA binding and strongly stimulates FANCM-mediated DNA remodeling. Recruited by FANCM to the Fanconi anemia (FA) core complex, which consists of CENPS, CENPX, FANCA, FANCB, FANCC, FANCE, FANCF, FANCG, FANCL, FANCM, FAAP24 and FAAP100. The FA core complex associates with Bloom syndrome (BLM) complex, which consists of at least BLM, DNA topoisomerase 3-alpha (TOP3A), RMI1/BLAP75, RPA1/RPA70 and RPA2/RPA32. The super complex between FA and BLM is called BRAFT. Component of the CENPA-CAD complex, composed of CENPI, CENPK, CENPL, CENPO, CENPP, CENPQ, CENPR and CENPS. The CENPA-CAD complex is probably recruited on centromeres by the CENPA-NAC complex, composed of at least CENPA, CENPC, CENPH, CENPM, CENPN, CENPT and CENPU. Ubiquitously expressed.

The protein resides in the nucleus. It localises to the chromosome. Its subcellular location is the centromere. The protein localises to the kinetochore. Its function is as follows. DNA-binding component of the Fanconi anemia (FA) core complex. Required for the normal activation of the FA pathway, leading to monoubiquitination of the FANCI-FANCD2 complex in response to DNA damage, cellular resistance to DNA cross-linking drugs, and prevention of chromosomal breakage. In complex with CENPX (MHF heterodimer), crucial cofactor for FANCM in both binding and ATP-dependent remodeling of DNA. Stabilizes FANCM. In complex with CENPX and FANCM (but not other FANC proteins), rapidly recruited to blocked forks and promotes gene conversion at blocked replication forks. In complex with CENPT, CENPW and CENPX (CENP-T-W-S-X heterotetramer), involved in the formation of a functional kinetochore outer plate, which is essential for kinetochore-microtubule attachment and faithful mitotic progression. As a component of MHF and CENP-T-W-S-X complexes, binds DNA and bends it to form a nucleosome-like structure. DNA-binding function is fulfilled in the presence of CENPX, with the following preference for DNA substates: Holliday junction &gt; double-stranded &gt; splay arm &gt; single-stranded. Does not bind DNA on its own. This is Centromere protein S (CENPS) from Homo sapiens (Human).